Reading from the N-terminus, the 189-residue chain is Crossover junction endodeoxyribonuclease RuvC (189 aa).

Residues aspartate 7, glutamate 68, and aspartate 141 contribute to the active site. Residues aspartate 7, glutamate 68, and aspartate 141 each contribute to the Mg(2+) site.

Belongs to the RuvC family. As to quaternary structure, homodimer which binds Holliday junction (HJ) DNA. The HJ becomes 2-fold symmetrical on binding to RuvC with unstacked arms; it has a different conformation from HJ DNA in complex with RuvA. In the full resolvosome a probable DNA-RuvA(4)-RuvB(12)-RuvC(2) complex forms which resolves the HJ. Mg(2+) serves as cofactor.

It is found in the cytoplasm. It catalyses the reaction Endonucleolytic cleavage at a junction such as a reciprocal single-stranded crossover between two homologous DNA duplexes (Holliday junction).. In terms of biological role, the RuvA-RuvB-RuvC complex processes Holliday junction (HJ) DNA during genetic recombination and DNA repair. Endonuclease that resolves HJ intermediates. Cleaves cruciform DNA by making single-stranded nicks across the HJ at symmetrical positions within the homologous arms, yielding a 5'-phosphate and a 3'-hydroxyl group; requires a central core of homology in the junction. The consensus cleavage sequence is 5'-(A/T)TT(C/G)-3'. Cleavage occurs on the 3'-side of the TT dinucleotide at the point of strand exchange. HJ branch migration catalyzed by RuvA-RuvB allows RuvC to scan DNA until it finds its consensus sequence, where it cleaves and resolves the cruciform DNA. The sequence is that of Crossover junction endodeoxyribonuclease RuvC from Rhodococcus opacus (strain B4).